The chain runs to 634 residues: 1-deoxy-D-xylulose-5-phosphate synthase (634 aa).

Residues H72 and G113–S115 each bind thiamine diphosphate. Mg(2+) is bound at residue D144. Residues G145–A146, N173, Y284, and E367 contribute to the thiamine diphosphate site. N173 lines the Mg(2+) pocket.

Belongs to the transketolase family. DXPS subfamily. Homodimer. The cofactor is Mg(2+). Thiamine diphosphate serves as cofactor.

The enzyme catalyses D-glyceraldehyde 3-phosphate + pyruvate + H(+) = 1-deoxy-D-xylulose 5-phosphate + CO2. Its pathway is metabolic intermediate biosynthesis; 1-deoxy-D-xylulose 5-phosphate biosynthesis; 1-deoxy-D-xylulose 5-phosphate from D-glyceraldehyde 3-phosphate and pyruvate: step 1/1. Its function is as follows. Catalyzes the acyloin condensation reaction between C atoms 2 and 3 of pyruvate and glyceraldehyde 3-phosphate to yield 1-deoxy-D-xylulose-5-phosphate (DXP). In Listeria welshimeri serovar 6b (strain ATCC 35897 / DSM 20650 / CCUG 15529 / CIP 8149 / NCTC 11857 / SLCC 5334 / V8), this protein is 1-deoxy-D-xylulose-5-phosphate synthase.